Here is a 57-residue protein sequence, read N- to C-terminus: Myrmicitoxin(1)-Pm7a (57 aa).

The first 23 residues, 1–23 (MMKIIYAFLLIAVVAFMGSGIMA), serve as a signal peptide directing secretion. The propeptide occupies 24–31 (EPLAEAIA).

The protein belongs to the formicidae venom clade 4 family. As to expression, expressed by the venom gland.

The protein localises to the secreted. Its function is as follows. Probable neurotoxin. The sequence is that of Myrmicitoxin(1)-Pm7a from Pogonomyrmex maricopa (Maricopa harvester ant).